The sequence spans 125 residues: Egg cell-secreted protein 1.3 (125 aa).

Residues 1–24 (MASNTSFLFVTVTLLLVLNVSSRA) form the signal peptide.

It belongs to the plant egg cell-secreted peptide family. Restricted to female reproductive tissues, specifically accumulating in storage vesicles of the unfertilized egg cell.

It localises to the cytoplasmic vesicle. The protein resides in the secreted. Its function is as follows. Involved in the regulation of gamete interactions during the double fertilization and to prevent multiple-pollen tube attraction; mediates the redistribution of the gamete fusogen HAP2/GCS1 to the cell surface after secretion upon sperm arrival. The protein is Egg cell-secreted protein 1.3 (EC1.3) of Arabidopsis thaliana (Mouse-ear cress).